Reading from the N-terminus, the 2565-residue chain is Transformation/transcription domain-associated protein (2565 aa).

Phosphoserine is present on residues S328, S749, and S775. Residues 710–1087 (SEVVIKWELQ…SPMAANQTPT (378 aa)) form an interaction with TP53 region. The short motif at 745 to 760 (KRGLSVDSAQEVKRFR) is the Bipartite nuclear localization signal element. K1242 participates in a covalent cross-link: Glycyl lysine isopeptide (Lys-Gly) (interchain with G-Cter in SUMO2). A compositionally biased stretch (basic and acidic residues) spans 1242-1253 (KQEPRERENSES). Positions 1242-1277 (KQEPRERENSESKEEDVEIDIELAPGDQTSTPKTKE) are disordered. The 573-residue stretch at 1391–1963 (VLKYLGKTHN…YFPIRTLYLT (573 aa)) folds into the FAT domain. Residue K1766 is modified to N6-acetyllysine. Residues 1973 to 1995 (KSDSGQQQPSSAGNQSHSASDPG) are disordered. Polar residues predominate over residues 1975–1991 (DSGQQQPSSAGNQSHSA). One can recognise a PI3K/PI4K catalytic domain in the interval 2206–2529 (MPRVEIVQKH…AVTAIMTRLH (324 aa)). Residues 2212 to 2218 (VQKHNTA) form a G-loop region. The catalytic loop stretch occupies residues 2393–2401 (HLNRLNPEM). An activation loop region spans residues 2413 to 2438 (VAYFRFDINDATGDLDANRPVPFRLT). Residues 2533–2565 (QFDGGESKVNTLVAAANSLDNLCRMDPAWHPWL) enclose the FATC domain.

Belongs to the PI3/PI4-kinase family. TRA1 subfamily. As to quaternary structure, interacts with MYC, E2F1 and E2F4 transcription factors. Interacts directly with p53/TP53. Interacts with GCN5L2. Component of various HAT complexes. Component of the PCAF complex, at least composed of TADA2L/ADA2, SUPT3H, TADA3L/ADA3, TAF5L/PAF65-beta, TAF6L/PAF65-alpha, TAF10/TAFII30, TAF12/TAFII20, TAF9/TAFII31 and TRRAP. Component of the TFTC-HAT complex, at least composed of TAF5L, TAF6L, TADA3L, SUPT3H/SPT3, TAF2/TAFII150, TAF4/TAFII135, TAF5/TAFII100, GCN5L2/GCN5, TAF10 and TRRAP. Component of the NuA4 histone acetyltransferase complex which contains the catalytic subunit KAT5/TIP60 and the subunits EP400, TRRAP/PAF400, BRD8/SMAP, EPC1, DMAP1/DNMAP1, RUVBL1/TIP49, RUVBL2, ING3, actin, ACTL6A/BAF53A, MORF4L1/MRG15, MORF4L2/MRGX, MRGBP, YEATS4/GAS41, VPS72/YL1 and MEAF6. Component of the STAGA complex, at least composed of SUPT3H, GCN5L2, SUPT7L, TAF5L, TAF6L, TADA3L, TAD1L, TAF10, TAF12, TRRAP and TAF9. The STAGA core complex is associated with a subcomplex required for histone deubiquitination composed of ATXN7L3, ENY2 and USP22. Component of the BAF53 complex, at least composed of BAF53A, RUVBL1, SMARCA4/BRG1, and TRRAP, which preferentially acetylates histone H4 (and H2A) within nucleosomes. Interacts with NPAT. Interaction with TELO2 and TTI1. Component of a SWR1-like complex. As to expression, expressed in the cochlea.

The protein resides in the nucleus. In terms of biological role, adapter protein, which is found in various multiprotein chromatin complexes with histone acetyltransferase activity (HAT), which gives a specific tag for epigenetic transcription activation. Component of the NuA4 histone acetyltransferase complex which is responsible for acetylation of nucleosomal histones H4 and H2A. Plays a central role in MYC transcription activation, and also participates in cell transformation by MYC. Required for p53/TP53-, E2F1- and E2F4-mediated transcription activation. Probably acts by linking transcription factors such as E1A, MYC or E2F1 to HAT complexes such as STAGA thereby allowing transcription activation. Probably not required in the steps following histone acetylation in processes of transcription activation. May be required for the mitotic checkpoint and normal cell cycle progression. Component of a SWR1-like complex that specifically mediates the removal of histone H2A.Z/H2AZ1 from the nucleosome. May play a role in the formation and maintenance of the auditory system. The protein is Transformation/transcription domain-associated protein (Trrap) of Mus musculus (Mouse).